Here is a 331-residue protein sequence, read N- to C-terminus: Probable staphylococcal-like nuclease CAN1 (331 aa).

Gly2 carries N-myristoyl glycine lipidation. Residue Cys10 is the site of S-palmitoyl cysteine attachment. In terms of domain architecture, TNase-like spans 136 to 313; it reads HTLPVDAKAV…QSGRKGLWAA (178 aa). Asp149 serves as a coordination point for Ca(2+). Residue Arg220 is part of the active site. Asp225 is a Ca(2+) binding site. Active-site residues include Glu228 and Arg262. Positions 306–331 are disordered; it reads GRKGLWAASRPQKPWEWRRDKRNGTA. Basic and acidic residues predominate over residues 318 to 331; the sequence is KPWEWRRDKRNGTA.

The protein belongs to the thermonuclease family. The cofactor is Ca(2+).

It is found in the cell membrane. Enzyme that catalyzes the hydrolysis of both DNA and RNA at the 5' position of the phosphodiester bond. This is Probable staphylococcal-like nuclease CAN1 from Oryza sativa subsp. japonica (Rice).